Reading from the N-terminus, the 411-residue chain is Alpha-1-antiproteinase (411 aa).

The signal sequence occupies residues 1–24 (MAPSISRGLLLLAALCCLAPSFLA). S33 is modified (phosphoserine). N-linked (GlcNAc...) asparagine glycosylation is found at N64, N101, and N265. The segment at 367-386 (GATVVEAVPMSLPPQVKFDH) is RCL. Position 377 is a phosphoserine (S377).

This sequence belongs to the serpin family. As to quaternary structure, interacts with CELA2A. Interacts with ERGIC3 and LMAN1/ERGIC53. Interacts with PRSS1/Trypsin. In terms of tissue distribution, plasma.

It is found in the secreted. In terms of biological role, inhibitor of serine proteases. The primary target is elastase, but also has a moderate affinity for plasmin and thrombin. The protein is Alpha-1-antiproteinase (Serpina1) of Rattus norvegicus (Rat).